The chain runs to 317 residues: Beta-ketoacyl-[acyl-carrier-protein] synthase III (317 aa).

Residues C112 and H244 contribute to the active site. Residues 245 to 249 are ACP-binding; that stretch reads QANIR. N274 is a catalytic residue.

The protein belongs to the thiolase-like superfamily. FabH family. As to quaternary structure, homodimer.

Its subcellular location is the cytoplasm. It carries out the reaction malonyl-[ACP] + acetyl-CoA + H(+) = 3-oxobutanoyl-[ACP] + CO2 + CoA. The protein operates within lipid metabolism; fatty acid biosynthesis. Its function is as follows. Catalyzes the condensation reaction of fatty acid synthesis by the addition to an acyl acceptor of two carbons from malonyl-ACP. Catalyzes the first condensation reaction which initiates fatty acid synthesis and may therefore play a role in governing the total rate of fatty acid production. Possesses both acetoacetyl-ACP synthase and acetyl transacylase activities. Its substrate specificity determines the biosynthesis of branched-chain and/or straight-chain of fatty acids. This is Beta-ketoacyl-[acyl-carrier-protein] synthase III from Rickettsia prowazekii (strain Madrid E).